The chain runs to 91 residues: Probable Fe(2+)-trafficking protein (91 aa).

The protein belongs to the Fe(2+)-trafficking protein family.

Could be a mediator in iron transactions between iron acquisition and iron-requiring processes, such as synthesis and/or repair of Fe-S clusters in biosynthetic enzymes. In Ralstonia nicotianae (strain ATCC BAA-1114 / GMI1000) (Ralstonia solanacearum), this protein is Probable Fe(2+)-trafficking protein.